Reading from the N-terminus, the 264-residue chain is Thymidylate synthase (264 aa).

Arg21 lines the dUMP pocket. His51 lines the (6R)-5,10-methylene-5,6,7,8-tetrahydrofolate pocket. 126-127 contacts dUMP; it reads RR. Cys146 serves as the catalytic Nucleophile. Residues 166-169, Asn177, and 207-209 each bind dUMP; these read RSCD and HLY. Asp169 provides a ligand contact to (6R)-5,10-methylene-5,6,7,8-tetrahydrofolate. Ser263 lines the (6R)-5,10-methylene-5,6,7,8-tetrahydrofolate pocket.

This sequence belongs to the thymidylate synthase family. Bacterial-type ThyA subfamily. In terms of assembly, homodimer.

It localises to the cytoplasm. It catalyses the reaction dUMP + (6R)-5,10-methylene-5,6,7,8-tetrahydrofolate = 7,8-dihydrofolate + dTMP. It functions in the pathway pyrimidine metabolism; dTTP biosynthesis. In terms of biological role, catalyzes the reductive methylation of 2'-deoxyuridine-5'-monophosphate (dUMP) to 2'-deoxythymidine-5'-monophosphate (dTMP) while utilizing 5,10-methylenetetrahydrofolate (mTHF) as the methyl donor and reductant in the reaction, yielding dihydrofolate (DHF) as a by-product. This enzymatic reaction provides an intracellular de novo source of dTMP, an essential precursor for DNA biosynthesis. This is Thymidylate synthase from Wigglesworthia glossinidia brevipalpis.